The following is a 62-amino-acid chain: Large ribosomal subunit protein bL28 (62 aa).

This sequence belongs to the bacterial ribosomal protein bL28 family.

This Thermobifida fusca (strain YX) protein is Large ribosomal subunit protein bL28.